We begin with the raw amino-acid sequence, 224 residues long: Putative carbamate hydrolase RutD (224 aa).

The AB hydrolase-1 domain maps to 14 to 115; that stretch reads PVVVLISGLG…TVLVSVNGWL (102 aa).

This sequence belongs to the AB hydrolase superfamily. Hydrolase RutD family.

The catalysed reaction is carbamate + 2 H(+) = NH4(+) + CO2. Functionally, involved in pyrimidine catabolism. May facilitate the hydrolysis of carbamate, a reaction that can also occur spontaneously. The protein is Putative carbamate hydrolase RutD of Shigella dysenteriae serotype 1 (strain Sd197).